Here is a 350-residue protein sequence, read N- to C-terminus: Biotin synthase (350 aa).

Residues R54–S278 form the Radical SAM core domain. Residues C69, C73, and C76 each contribute to the [4Fe-4S] cluster site. Positions 113, 144, 204, and 276 each coordinate [2Fe-2S] cluster.

It belongs to the radical SAM superfamily. Biotin synthase family. As to quaternary structure, homodimer. The cofactor is [4Fe-4S] cluster. It depends on [2Fe-2S] cluster as a cofactor.

The catalysed reaction is (4R,5S)-dethiobiotin + (sulfur carrier)-SH + 2 reduced [2Fe-2S]-[ferredoxin] + 2 S-adenosyl-L-methionine = (sulfur carrier)-H + biotin + 2 5'-deoxyadenosine + 2 L-methionine + 2 oxidized [2Fe-2S]-[ferredoxin]. It functions in the pathway cofactor biosynthesis; biotin biosynthesis; biotin from 7,8-diaminononanoate: step 2/2. Catalyzes the conversion of dethiobiotin (DTB) to biotin by the insertion of a sulfur atom into dethiobiotin via a radical-based mechanism. In Neisseria meningitidis serogroup A / serotype 4A (strain DSM 15465 / Z2491), this protein is Biotin synthase.